The primary structure comprises 251 residues: Imidazole glycerol phosphate synthase subunit HisF (251 aa).

Active-site residues include Asp11 and Asp130.

It belongs to the HisA/HisF family. In terms of assembly, heterodimer of HisH and HisF.

The protein resides in the cytoplasm. It carries out the reaction 5-[(5-phospho-1-deoxy-D-ribulos-1-ylimino)methylamino]-1-(5-phospho-beta-D-ribosyl)imidazole-4-carboxamide + L-glutamine = D-erythro-1-(imidazol-4-yl)glycerol 3-phosphate + 5-amino-1-(5-phospho-beta-D-ribosyl)imidazole-4-carboxamide + L-glutamate + H(+). Its pathway is amino-acid biosynthesis; L-histidine biosynthesis; L-histidine from 5-phospho-alpha-D-ribose 1-diphosphate: step 5/9. In terms of biological role, IGPS catalyzes the conversion of PRFAR and glutamine to IGP, AICAR and glutamate. The HisF subunit catalyzes the cyclization activity that produces IGP and AICAR from PRFAR using the ammonia provided by the HisH subunit. The protein is Imidazole glycerol phosphate synthase subunit HisF of Chlorobium phaeobacteroides (strain BS1).